We begin with the raw amino-acid sequence, 261 residues long: Phosphoribosylaminoimidazole-succinocarboxamide synthase (261 aa).

It belongs to the SAICAR synthetase family.

It catalyses the reaction 5-amino-1-(5-phospho-D-ribosyl)imidazole-4-carboxylate + L-aspartate + ATP = (2S)-2-[5-amino-1-(5-phospho-beta-D-ribosyl)imidazole-4-carboxamido]succinate + ADP + phosphate + 2 H(+). It functions in the pathway purine metabolism; IMP biosynthesis via de novo pathway; 5-amino-1-(5-phospho-D-ribosyl)imidazole-4-carboxamide from 5-amino-1-(5-phospho-D-ribosyl)imidazole-4-carboxylate: step 1/2. This Novosphingobium aromaticivorans (strain ATCC 700278 / DSM 12444 / CCUG 56034 / CIP 105152 / NBRC 16084 / F199) protein is Phosphoribosylaminoimidazole-succinocarboxamide synthase.